Here is a 196-residue protein sequence, read N- to C-terminus: Peptidyl-tRNA hydrolase (196 aa).

TRNA is bound at residue Tyr-17. His-22 acts as the Proton acceptor in catalysis. Phe-68, Asn-70, and Asn-116 together coordinate tRNA.

The protein belongs to the PTH family. Monomer.

It localises to the cytoplasm. The catalysed reaction is an N-acyl-L-alpha-aminoacyl-tRNA + H2O = an N-acyl-L-amino acid + a tRNA + H(+). Its function is as follows. Hydrolyzes ribosome-free peptidyl-tRNAs (with 1 or more amino acids incorporated), which drop off the ribosome during protein synthesis, or as a result of ribosome stalling. Functionally, catalyzes the release of premature peptidyl moieties from peptidyl-tRNA molecules trapped in stalled 50S ribosomal subunits, and thus maintains levels of free tRNAs and 50S ribosomes. In Photorhabdus laumondii subsp. laumondii (strain DSM 15139 / CIP 105565 / TT01) (Photorhabdus luminescens subsp. laumondii), this protein is Peptidyl-tRNA hydrolase.